The chain runs to 189 residues: Elongation factor P (189 aa).

An N6-(3,6-diaminohexanoyl)-5-hydroxylysine modification is found at Lys-34.

Belongs to the elongation factor P family. Post-translationally, may be beta-lysylated on the epsilon-amino group of Lys-34 by the combined action of EpmA and EpmB, and then hydroxylated on the C5 position of the same residue by EpmC (if this protein is present). Lysylation is critical for the stimulatory effect of EF-P on peptide-bond formation. The lysylation moiety may extend toward the peptidyltransferase center and stabilize the terminal 3-CCA end of the tRNA. Hydroxylation of the C5 position on Lys-34 may allow additional potential stabilizing hydrogen-bond interactions with the P-tRNA.

It localises to the cytoplasm. The protein operates within protein biosynthesis; polypeptide chain elongation. In terms of biological role, involved in peptide bond synthesis. Alleviates ribosome stalling that occurs when 3 or more consecutive Pro residues or the sequence PPG is present in a protein, possibly by augmenting the peptidyl transferase activity of the ribosome. Modification of Lys-34 is required for alleviation. In Saccharophagus degradans (strain 2-40 / ATCC 43961 / DSM 17024), this protein is Elongation factor P.